Consider the following 251-residue polypeptide: 5-oxoprolinase subunit A 2 (251 aa).

Belongs to the LamB/PxpA family. In terms of assembly, forms a complex composed of PxpA, PxpB and PxpC.

The enzyme catalyses 5-oxo-L-proline + ATP + 2 H2O = L-glutamate + ADP + phosphate + H(+). Functionally, catalyzes the cleavage of 5-oxoproline to form L-glutamate coupled to the hydrolysis of ATP to ADP and inorganic phosphate. In Pseudomonas syringae pv. tomato (strain ATCC BAA-871 / DC3000), this protein is 5-oxoprolinase subunit A 2.